A 515-amino-acid chain; its full sequence is ATP synthase subunit alpha (515 aa).

Position 171-178 (171-178 (GDRQTGKT)) interacts with ATP.

Belongs to the ATPase alpha/beta chains family. In terms of assembly, F-type ATPases have 2 components, CF(1) - the catalytic core - and CF(0) - the membrane proton channel. CF(1) has five subunits: alpha(3), beta(3), gamma(1), delta(1), epsilon(1). CF(0) has three main subunits: a(1), b(2) and c(9-12). The alpha and beta chains form an alternating ring which encloses part of the gamma chain. CF(1) is attached to CF(0) by a central stalk formed by the gamma and epsilon chains, while a peripheral stalk is formed by the delta and b chains.

Its subcellular location is the cell inner membrane. It catalyses the reaction ATP + H2O + 4 H(+)(in) = ADP + phosphate + 5 H(+)(out). Its function is as follows. Produces ATP from ADP in the presence of a proton gradient across the membrane. The alpha chain is a regulatory subunit. This is ATP synthase subunit alpha from Xanthomonas campestris pv. campestris (strain 8004).